The sequence spans 326 residues: Phospho-N-acetylmuramoyl-pentapeptide-transferase (326 aa).

Transmembrane regions (helical) follow at residues 3–23 (ISIS…PAFI), 51–71 (TMGG…FALF), 79–99 (VGMI…DDFL), 115–135 (LALQ…GGDI), 138–158 (VFGY…FWLV), 169–189 (GVDG…GVIA), 195–215 (MDIL…FIFN), 221–243 (VFMG…MALH), and 306–326 (FFFW…LYLM).

This sequence belongs to the glycosyltransferase 4 family. MraY subfamily. Mg(2+) is required as a cofactor.

It localises to the cell membrane. The enzyme catalyses UDP-N-acetyl-alpha-D-muramoyl-L-alanyl-gamma-D-glutamyl-L-lysyl-D-alanyl-D-alanine + di-trans,octa-cis-undecaprenyl phosphate = Mur2Ac(oyl-L-Ala-gamma-D-Glu-L-Lys-D-Ala-D-Ala)-di-trans,octa-cis-undecaprenyl diphosphate + UMP. It functions in the pathway cell wall biogenesis; peptidoglycan biosynthesis. In terms of biological role, catalyzes the initial step of the lipid cycle reactions in the biosynthesis of the cell wall peptidoglycan: transfers peptidoglycan precursor phospho-MurNAc-pentapeptide from UDP-MurNAc-pentapeptide onto the lipid carrier undecaprenyl phosphate, yielding undecaprenyl-pyrophosphoryl-MurNAc-pentapeptide, known as lipid I. This chain is Phospho-N-acetylmuramoyl-pentapeptide-transferase, found in Streptococcus pneumoniae serotype 2 (strain D39 / NCTC 7466).